Here is a 787-residue protein sequence, read N- to C-terminus: Mitochondrial intermediate peptidase (787 aa).

A mitochondrion-targeting transit peptide spans 1–36; sequence MQNKVLRGILFKNVPLGYSYNRSIRHPTFGNSIIRW. Position 573 (His573) interacts with Zn(2+). Glu574 is a catalytic residue. His577 and His580 together coordinate Zn(2+).

Belongs to the peptidase M3 family. Zn(2+) serves as cofactor.

It is found in the mitochondrion matrix. The enzyme catalyses Release of an N-terminal octapeptide as second stage of processing of some proteins imported into the mitochondrion.. Functionally, cleaves proteins, imported into the mitochondrion, to their mature size. While most mitochondrial precursor proteins are processed to the mature form in one step by mitochondrial processing peptidase (MPP), the sequential cleavage by MIP of an octapeptide after initial processing by MPP is a required step for a subgroup of nuclear-encoded precursor proteins destined for the matrix or the inner membrane. The protein is Mitochondrial intermediate peptidase (OCT1) of Vanderwaltozyma polyspora (strain ATCC 22028 / DSM 70294 / BCRC 21397 / CBS 2163 / NBRC 10782 / NRRL Y-8283 / UCD 57-17) (Kluyveromyces polysporus).